A 392-amino-acid chain; its full sequence is Acetyl-CoA acetyltransferase (392 aa).

Cysteine 85 functions as the Acyl-thioester intermediate in the catalytic mechanism. Residues cysteine 206, serine 207, valine 209, and lysine 332 each contribute to the CoA site. Histidine 336 acts as the Proton acceptor in catalysis.

It belongs to the thiolase-like superfamily. Thiolase family. Interacts with HMG-CoA synthase (HMGCS) that catalyzes the second step in the pathway and with a DUF35 protein. The acetoacetyl-CoA thiolase/HMG-CoA synthase complex channels the intermediate via a fused CoA-binding site, which allows for efficient coupling of the endergonic thiolase reaction with the exergonic HMGCS reaction.

The enzyme catalyses 2 acetyl-CoA = acetoacetyl-CoA + CoA. It participates in metabolic intermediate biosynthesis; (R)-mevalonate biosynthesis; (R)-mevalonate from acetyl-CoA: step 1/3. In terms of biological role, catalyzes the condensation of two acetyl-coA molecules into acetoacetyl-CoA. Functions in the mevalonate (MVA) pathway leading to isopentenyl diphosphate (IPP), a key precursor for the biosynthesis of isoprenoid compounds that are building blocks of archaeal membrane lipids. This is Acetyl-CoA acetyltransferase from Methanothermococcus thermolithotrophicus (Methanococcus thermolithotrophicus).